Consider the following 432-residue polypeptide: Argininosuccinate lyase (432 aa).

This sequence belongs to the lyase 1 family. Argininosuccinate lyase subfamily.

It localises to the cytoplasm. The catalysed reaction is 2-(N(omega)-L-arginino)succinate = fumarate + L-arginine. The protein operates within amino-acid biosynthesis; L-arginine biosynthesis; L-arginine from L-ornithine and carbamoyl phosphate: step 3/3. The sequence is that of Argininosuccinate lyase from Xanthomonas euvesicatoria pv. vesicatoria (strain 85-10) (Xanthomonas campestris pv. vesicatoria).